The following is a 102-amino-acid chain: Large ribosomal subunit protein bL21 (102 aa).

The protein belongs to the bacterial ribosomal protein bL21 family. As to quaternary structure, part of the 50S ribosomal subunit. Contacts protein L20.

In terms of biological role, this protein binds to 23S rRNA in the presence of protein L20. The polypeptide is Large ribosomal subunit protein bL21 (Levilactobacillus brevis (strain ATCC 367 / BCRC 12310 / CIP 105137 / JCM 1170 / LMG 11437 / NCIMB 947 / NCTC 947) (Lactobacillus brevis)).